A 322-amino-acid chain; its full sequence is MGIGSYHEPVLAAEVLQLLVRMPGVYVDGTLGGGGHSLAILEELERKGFLADSFLIGIDQDDHALKAASEKLSGFSGSTAIIKGNFSAIAAIVRKISAERHFTDSVAGILLDLGVSSAQIDTPERGFSYMRSGPLDMRMDPEAESSAADLVNTLSERELVTLFFRYGEEPRSRSIARGIIDYREKHGSILRTEELAEIIRLREARPDRVIKTLSRVFQALRVEVNRELEVLEQVLADGASLLSAQGRLAVISYHSLEDRMVKSFFTAQSSSDWGPRGVGLTEPLKKAEFAVVTRKPVASGQQELSLNPRSRSAKLRVLEKLA.

S-adenosyl-L-methionine is bound by residues 34-36 (GGH), Asp-59, Phe-86, Asp-112, and Gln-119.

This sequence belongs to the methyltransferase superfamily. RsmH family.

Its subcellular location is the cytoplasm. It carries out the reaction cytidine(1402) in 16S rRNA + S-adenosyl-L-methionine = N(4)-methylcytidine(1402) in 16S rRNA + S-adenosyl-L-homocysteine + H(+). Specifically methylates the N4 position of cytidine in position 1402 (C1402) of 16S rRNA. The protein is Ribosomal RNA small subunit methyltransferase H of Chlorobium limicola (strain DSM 245 / NBRC 103803 / 6330).